A 421-amino-acid chain; its full sequence is Proton/sodium-glutamate symport protein (421 aa).

At 1-3 the chain is on the cytoplasmic side; the sequence is MRK. A helical membrane pass occupies residues 4–24; that stretch reads IGLAWQIFIGLILGIIVGAIF. The Extracellular portion of the chain corresponds to 25–43; that stretch reads YGNPKVATYLQPIGDIFLR. The helical transmembrane segment at 44–64 threads the bilayer; sequence LIKMIVIPIVISSLVVGVASV. Residues 65 to 77 lie on the Cytoplasmic side of the membrane; the sequence is GDLKKLGKLGGKT. The helical transmembrane segment at 78–98 threads the bilayer; the sequence is IIYFEIITTIAIVVGLLAANI. The Extracellular portion of the chain corresponds to 99 to 148; sequence FQPGTGVNMKSLEKTDIQSYVDTTNEVQHHSMVETFVNIVPKNIFESLTK. The helical transmembrane segment at 149 to 169 threads the bilayer; that stretch reads GDMLPIIFFSVMFGLGVAAIG. The Cytoplasmic portion of the chain corresponds to 170 to 198; the sequence is EKGKPVLQFFQGTAEAMFYVTNQIMKFAP. A helical transmembrane segment spans residues 199 to 219; it reads FGVFALIGVTVSKFGVESLIP. Topologically, residues 220–222 are extracellular; it reads LSK. The chain crosses the membrane as a helical span at residues 223 to 243; the sequence is LVIVVYATMVFFIFVVLGGVA. A topological domain (cytoplasmic) is located at residue K244. The helical transmembrane segment at 245 to 265 threads the bilayer; sequence LFGINIFHIIKILKDELILAY. Residues 266–306 are Extracellular-facing; sequence STASSETVLPKIMEKMENFGCPKAITSFVIPTGYSFNLDGS. The helical transmembrane segment at 307–327 threads the bilayer; it reads TLYQALAAIFIAQLYGIDMPI. Residues 328–330 lie on the Cytoplasmic side of the membrane; sequence SQQ. A run of 2 helical transmembrane segments spans residues 331 to 351 and 352 to 372; these read ISLLLVLMVTSKGIAGVPGVS and FVVLLATLGTVGIPIEGLAFI. The Cytoplasmic portion of the chain corresponds to 373–421; sequence AGIDRILDMARTAVNVIGNSLAAIIMSKWEGQYNEEKGKQYIAQLQQSA.

It belongs to the dicarboxylate/amino acid:cation symporter (DAACS) (TC 2.A.23) family. Homotrimer.

The protein localises to the cell membrane. Its function is as follows. This carrier protein is part of the Na(+)-dependent, binding-protein-independent glutamate-aspartate transport system. In Geobacillus stearothermophilus (Bacillus stearothermophilus), this protein is Proton/sodium-glutamate symport protein (gltT).